The sequence spans 79 residues: RNA-binding protein Hfq (79 aa).

A Sm domain is found at 10-70; that stretch reads DAFLNHVRKT…ISTIMPAQPI (61 aa).

It belongs to the Hfq family. As to quaternary structure, homohexamer.

Its function is as follows. RNA chaperone that binds small regulatory RNA (sRNAs) and mRNAs to facilitate mRNA translational regulation in response to envelope stress, environmental stress and changes in metabolite concentrations. Also binds with high specificity to tRNAs. The sequence is that of RNA-binding protein Hfq from Ruegeria pomeroyi (strain ATCC 700808 / DSM 15171 / DSS-3) (Silicibacter pomeroyi).